The primary structure comprises 90 residues: Putative F-box protein At5g16285 (90 aa).

One can recognise an F-box domain in the interval Met1 to Lys46.

This is Putative F-box protein At5g16285 from Arabidopsis thaliana (Mouse-ear cress).